The chain runs to 383 residues: F-box/kelch-repeat protein At1g16250 (383 aa).

The region spanning 7 to 54 (SIIPGLPDDLALRCIAKLSHGYHGVLECVSRGWRDLVRGADYSCYKAR) is the F-box domain. Kelch repeat units lie at residues 50–103 (CYKA…GFAC), 109–165 (CLLV…SVSG), 166–214 (KVYV…SYRG), 216–263 (FHVL…VMKN), and 318–377 (ELYV…CVSL).

The sequence is that of F-box/kelch-repeat protein At1g16250 from Arabidopsis thaliana (Mouse-ear cress).